The following is a 131-amino-acid chain: Global transcriptional regulator Spx (131 aa).

A disulfide bridge connects residues Cys-10 and Cys-13.

The protein belongs to the ArsC family. Spx subfamily. As to quaternary structure, interacts with the C-terminal domain of the alpha subunit of the RNAP.

The protein resides in the cytoplasm. Global transcriptional regulator that plays a key role in stress response and exerts either positive or negative regulation of genes. Acts by interacting with the C-terminal domain of the alpha subunit of the RNA polymerase (RNAP). This interaction can enhance binding of RNAP to the promoter region of target genes and stimulate their transcription, or block interaction of RNAP with activator. In Staphylococcus saprophyticus subsp. saprophyticus (strain ATCC 15305 / DSM 20229 / NCIMB 8711 / NCTC 7292 / S-41), this protein is Global transcriptional regulator Spx.